The chain runs to 218 residues: Nonsense-mediated decay protein 4 (218 aa).

Its subcellular location is the cytoplasm. Its function is as follows. Involved in nonsense-mediated decay of mRNAs containing premature stop codons. The chain is Nonsense-mediated decay protein 4 (NMD4) from Saccharomyces cerevisiae (strain ATCC 204508 / S288c) (Baker's yeast).